The sequence spans 317 residues: uncharacterized protein (317 aa).

The next 7 membrane-spanning stretches (helical) occupy residues 18-38 (FWLI…LVII), 58-78 (IILS…GFIF), 92-112 (FLGS…WWSF), 130-150 (LFSA…AWAV), 159-179 (LFHI…KLLP), 202-222 (CSFL…LSTV), and 252-272 (NLLN…LLIA).

Belongs to the CbiQ family.

It localises to the cell membrane. This is an uncharacterized protein from Mycoplasma genitalium (strain ATCC 33530 / DSM 19775 / NCTC 10195 / G37) (Mycoplasmoides genitalium).